The chain runs to 163 residues: Lipoprotein signal peptidase (163 aa).

Helical transmembrane passes span 9 to 29 (AWPW…SKYL), 42 to 62 (ILPF…SFLG), 67 to 87 (WQII…ILWL), and 93 to 113 (SEIM…GNFI). Catalysis depends on residues Asp-123 and Asp-141. The helical transmembrane segment at 137-157 (FNVADSAICVGVFLLIVHMLL) threads the bilayer.

It belongs to the peptidase A8 family.

It is found in the cell inner membrane. The enzyme catalyses Release of signal peptides from bacterial membrane prolipoproteins. Hydrolyzes -Xaa-Yaa-Zaa-|-(S,diacylglyceryl)Cys-, in which Xaa is hydrophobic (preferably Leu), and Yaa (Ala or Ser) and Zaa (Gly or Ala) have small, neutral side chains.. It functions in the pathway protein modification; lipoprotein biosynthesis (signal peptide cleavage). This protein specifically catalyzes the removal of signal peptides from prolipoproteins. This is Lipoprotein signal peptidase from Coxiella burnetii (strain RSA 493 / Nine Mile phase I).